Consider the following 685-residue polypeptide: Sulfite reductase [ferredoxin], chloroplastic (685 aa).

Residues Met1–Ala51 constitute a chloroplast transit peptide. Residues Cys495, Cys501, Cys541, and Cys545 each coordinate [4Fe-4S] cluster. Cys545 contacts siroheme.

It belongs to the nitrite and sulfite reductase 4Fe-4S domain family. As to quaternary structure, monomer. Interacts with ferredoxin. Siroheme is required as a cofactor. The cofactor is [4Fe-4S] cluster. In terms of processing, phosphorylated; this phosphorylation reduces DNA-binding. In terms of tissue distribution, expressed in leaves, stems, and roots.

The protein resides in the plastid. The protein localises to the chloroplast stroma. It is found in the chloroplast nucleoid. Its subcellular location is the plastid stroma. It catalyses the reaction hydrogen sulfide + 6 oxidized [2Fe-2S]-[ferredoxin] + 3 H2O = sulfite + 6 reduced [2Fe-2S]-[ferredoxin] + 7 H(+). Essential protein with sulfite reductase activity required in assimilatory sulfate reduction pathway during both primary and secondary metabolism and thus involved in development and growth. Its function is as follows. DNA-binding protein that binds to both double-stranded and single-stranded DNA without significant sequence specificity to reversibly repress the transcriptional activity of chloroplast nucleoids by promoting DNA compaction and possibly regulate DNA replication. The polypeptide is Sulfite reductase [ferredoxin], chloroplastic (SIR) (Pisum sativum (Garden pea)).